The following is a 285-amino-acid chain: Dermonecrotic toxin LlSicTox-alphaIII1ii (285 aa).

H12 is an active-site residue. Mg(2+) is bound by residues E32 and D34. H47 (nucleophile) is an active-site residue. C51 and C57 are joined by a disulfide. D91 contributes to the Mg(2+) binding site.

Belongs to the arthropod phospholipase D family. Class I subfamily. Mg(2+) is required as a cofactor. In terms of tissue distribution, expressed by the venom gland.

It is found in the secreted. It catalyses the reaction an N-(acyl)-sphingosylphosphocholine = an N-(acyl)-sphingosyl-1,3-cyclic phosphate + choline. The catalysed reaction is an N-(acyl)-sphingosylphosphoethanolamine = an N-(acyl)-sphingosyl-1,3-cyclic phosphate + ethanolamine. It carries out the reaction a 1-acyl-sn-glycero-3-phosphocholine = a 1-acyl-sn-glycero-2,3-cyclic phosphate + choline. The enzyme catalyses a 1-acyl-sn-glycero-3-phosphoethanolamine = a 1-acyl-sn-glycero-2,3-cyclic phosphate + ethanolamine. Functionally, dermonecrotic toxins cleave the phosphodiester linkage between the phosphate and headgroup of certain phospholipids (sphingolipid and lysolipid substrates), forming an alcohol (often choline) and a cyclic phosphate. This toxin acts on sphingomyelin (SM) with high activity (56.8 U/mg). It may also act on ceramide phosphoethanolamine (CPE), lysophosphatidylcholine (LPC) and lysophosphatidylethanolamine (LPE), but not on lysophosphatidylserine (LPS), and lysophosphatidylglycerol (LPG). It acts by transphosphatidylation, releasing exclusively cyclic phosphate products as second products. Induces dermonecrosis, hemolysis, increased vascular permeability, edema, inflammatory response, and platelet aggregation. Is lethal to mice. The polypeptide is Dermonecrotic toxin LlSicTox-alphaIII1ii (Loxosceles laeta (South American recluse spider)).